The primary structure comprises 271 residues: Pyrroline-5-carboxylate reductase (271 aa).

Belongs to the pyrroline-5-carboxylate reductase family.

It localises to the cytoplasm. It carries out the reaction L-proline + NADP(+) = (S)-1-pyrroline-5-carboxylate + NADPH + 2 H(+). The enzyme catalyses L-proline + NAD(+) = (S)-1-pyrroline-5-carboxylate + NADH + 2 H(+). Its pathway is amino-acid biosynthesis; L-proline biosynthesis; L-proline from L-glutamate 5-semialdehyde: step 1/1. In terms of biological role, catalyzes the reduction of 1-pyrroline-5-carboxylate (PCA) to L-proline. This chain is Pyrroline-5-carboxylate reductase, found in Staphylococcus saprophyticus subsp. saprophyticus (strain ATCC 15305 / DSM 20229 / NCIMB 8711 / NCTC 7292 / S-41).